Here is a 238-residue protein sequence, read N- to C-terminus: Small ribosomal subunit protein eS4 (238 aa).

The 73-residue stretch at 38 to 110 (LPLAIIIRDV…EKKYYALIPI (73 aa)) folds into the S4 RNA-binding domain.

Belongs to the eukaryotic ribosomal protein eS4 family.

This Pyrobaculum islandicum (strain DSM 4184 / JCM 9189 / GEO3) protein is Small ribosomal subunit protein eS4.